A 343-amino-acid chain; its full sequence is Ribosomal RNA small subunit methyltransferase C (343 aa).

The protein belongs to the methyltransferase superfamily. RsmC family. As to quaternary structure, monomer.

The protein localises to the cytoplasm. The catalysed reaction is guanosine(1207) in 16S rRNA + S-adenosyl-L-methionine = N(2)-methylguanosine(1207) in 16S rRNA + S-adenosyl-L-homocysteine + H(+). Functionally, specifically methylates the guanine in position 1207 of 16S rRNA in the 30S particle. The sequence is that of Ribosomal RNA small subunit methyltransferase C from Escherichia fergusonii (strain ATCC 35469 / DSM 13698 / CCUG 18766 / IAM 14443 / JCM 21226 / LMG 7866 / NBRC 102419 / NCTC 12128 / CDC 0568-73).